A 470-amino-acid polypeptide reads, in one-letter code: MESRNLLRQLPAVDQLLQHPRLKDLSRENYKMVLALTRQVLDDWRLKIKNGATTIPDPGQLAREIENRYHEAGRSSLRPVINATGVVLHTNLGRAILSPAARAAALTAAGRYTNLEYDLEKGQRGNRYSHVTGLLKELTGAEEALVVNNNAAAVLLALSTLAAGRETIISRGQLVEIGGSFRIPEVMGQSGTRLVEVGTTNKTYIHDYERAVGPDTALLLKVHPSNYRIQGFTREVTTAELVELGRRVGVPVMEDLGSGFLIDLEAYGITGEPTVQAEINQGVDVVTFSGDKLLGGPQAGIIVGRRDLVAAMAGHPLTRALRIDKMNLAALEATLRAYRNPDRAVKEIPTLAALVALPEDLRLRAEELQKLLTSVLGSRARVGLMPTTSQAGGGSLPVTELPSWAITIRPEQGGAAGLVTALRRTDPPVLARVQDDLLLLDVRTLLPGEGEELARALVQALEGAVHGGES.

K292 carries the N6-(pyridoxal phosphate)lysine modification.

Belongs to the SelA family. It depends on pyridoxal 5'-phosphate as a cofactor.

Its subcellular location is the cytoplasm. It catalyses the reaction L-seryl-tRNA(Sec) + selenophosphate + H(+) = L-selenocysteinyl-tRNA(Sec) + phosphate. It functions in the pathway aminoacyl-tRNA biosynthesis; selenocysteinyl-tRNA(Sec) biosynthesis; selenocysteinyl-tRNA(Sec) from L-seryl-tRNA(Sec) (bacterial route): step 1/1. Its function is as follows. Converts seryl-tRNA(Sec) to selenocysteinyl-tRNA(Sec) required for selenoprotein biosynthesis. This chain is L-seryl-tRNA(Sec) selenium transferase, found in Moorella thermoacetica (strain ATCC 39073 / JCM 9320).